The primary structure comprises 575 residues: MKKALVFFVALAMIGSVFAAEPAAEAKVAEFSGNAAVTFGFDLDTVKAGFKNTTEADLKFNLMNGGDKSTTGNGVWGELKLVVNALQIRATADVSDGHTFAIQTKKDNDGEDTIFVEIDTAKLHFNDLYVGITSGDFRYGGSFWYPNALNYKDSKEDEKYTRSRAAKLGYDQGLVLGYEKKDLFKVELAARSKKDTTKKVEKVELVHLSAGAKIKEKEYYKTEPAAVTGDTAQDIFNDGTLVSVTADPKVKTLNAEGAYYKPVMKDDETNYWTNKFALGLYGEVTPIKDLRIGVGAAYVLGQLGAAASEDDKTNDISVFAGVDYRFNFNEDFFIQPTVTYNFYNDYKVASKNYAIETNKMNAGLRFGFAKSKSDSENESLLYTFFGQEKLFYETTKNDKGDQILLPGVSVFGSFNFKENAMKTELPVMLTFYSGELVQNLKAYALFGANLGPDAGKGTAVAMSDAVYKGIIEKKGMQAGLAASYDVKVNDAVTIVPAAGVLWTHGSQASGNDKMSADEVAVSLKADVKGLVSNTTFTAFWEKASFGKGAASVGGTKTSVDAVKKGVIGLKAKIAL.

A signal peptide spans 1–19 (MKKALVFFVALAMIGSVFA).

The protein localises to the cell outer membrane. Its function is as follows. Major component of the outer membrane sheath. The protein is Major outer membrane protein MspA (mspA) of Treponema maltophilum.